The primary structure comprises 185 residues: Ribosome-recycling factor (185 aa).

This sequence belongs to the RRF family.

Its subcellular location is the cytoplasm. Functionally, responsible for the release of ribosomes from messenger RNA at the termination of protein biosynthesis. May increase the efficiency of translation by recycling ribosomes from one round of translation to another. This is Ribosome-recycling factor from Bacillus anthracis (strain A0248).